Reading from the N-terminus, the 194-residue chain is Probable GTP-binding protein EngB (194 aa).

The 173-residue stretch at 22 to 194 folds into the EngB-type G domain; it reads DLPEFALAGR…KFWDWIEDKM (173 aa). GTP is bound by residues 30–37, 57–61, 75–78, 142–145, and 175–177; these read GRSNVGKS, GKTQT, DVPG, TKMD, and FSS. Ser-37 and Thr-59 together coordinate Mg(2+).

The protein belongs to the TRAFAC class TrmE-Era-EngA-EngB-Septin-like GTPase superfamily. EngB GTPase family. The cofactor is Mg(2+).

In terms of biological role, necessary for normal cell division and for the maintenance of normal septation. The sequence is that of Probable GTP-binding protein EngB from Lactobacillus gasseri (strain ATCC 33323 / DSM 20243 / BCRC 14619 / CIP 102991 / JCM 1131 / KCTC 3163 / NCIMB 11718 / NCTC 13722 / AM63).